The sequence spans 125 residues: Large ribosomal subunit protein bL20 (125 aa).

Belongs to the bacterial ribosomal protein bL20 family.

Its function is as follows. Binds directly to 23S ribosomal RNA and is necessary for the in vitro assembly process of the 50S ribosomal subunit. It is not involved in the protein synthesizing functions of that subunit. The polypeptide is Large ribosomal subunit protein bL20 (Methylobacterium nodulans (strain LMG 21967 / CNCM I-2342 / ORS 2060)).